We begin with the raw amino-acid sequence, 283 residues long: Cyclin-C (283 aa).

The 99-residue stretch at 46-144 folds into the Cyclin N-terminal domain; that stretch reads NVIQALGEHL…ILECEFYLLE (99 aa). The disordered stretch occupies residues 252 to 283; it reads TILSKMPKPKPPPNSEGEQGPNGSQNSSYSQS. Residues 272-283 are compositionally biased toward polar residues; the sequence is PNGSQNSSYSQS.

This sequence belongs to the cyclin family. Cyclin C subfamily. As to quaternary structure, component of the Mediator complex. The cylin/CDK pair formed by CCNC/CDK8 also associates with the large subunit of RNA polymerase II.

The protein resides in the nucleus. Functionally, component of the Mediator complex, a coactivator involved in regulated gene transcription of nearly all RNA polymerase II-dependent genes. Mediator functions as a bridge to convey information from gene-specific regulatory proteins to the basal RNA polymerase II transcription machinery. Mediator is recruited to promoters by direct interactions with regulatory proteins and serves as a scaffold for the assembly of a functional preinitiation complex with RNA polymerase II and the general transcription factors. Binds to and activates cyclin-dependent kinase CDK8 that phosphorylates the CTD (C-terminal domain) of the large subunit of RNA polymerase II (RNAp II), which may inhibit the formation of a transcription initiation complex. The sequence is that of Cyclin-C (CCNC) from Gallus gallus (Chicken).